The following is a 372-amino-acid chain: Probable arabinan endo-1,5-alpha-L-arabinosidase B (372 aa).

The first 16 residues, 1 to 16 (MTVLVALFCLVTWTLC), serve as a signal peptide directing secretion. Positions 23 to 34 (STQGTQQPQQPE) are enriched in low complexity. Positions 23 to 52 (STQGTQQPQQPEKTPHPHPQPEDAFPPTHA) are disordered. The active-site Proton acceptor is the aspartate 59. N-linked (GlcNAc...) asparagine glycosylation occurs at asparagine 120. Glutamate 252 serves as the catalytic Proton donor. N-linked (GlcNAc...) asparagine glycosylation occurs at asparagine 363.

The protein belongs to the glycosyl hydrolase 43 family.

Its subcellular location is the secreted. It carries out the reaction Endohydrolysis of (1-&gt;5)-alpha-arabinofuranosidic linkages in (1-&gt;5)-arabinans.. Its pathway is glycan metabolism; L-arabinan degradation. Its function is as follows. Endo-1,5-alpha-L-arabinanase involved in degradation of pectin. Its preferred substrate is linear 1,5-alpha-L-arabinan. The polypeptide is Probable arabinan endo-1,5-alpha-L-arabinosidase B (abnB) (Aspergillus fumigatus (strain ATCC MYA-4609 / CBS 101355 / FGSC A1100 / Af293) (Neosartorya fumigata)).